A 265-amino-acid polypeptide reads, in one-letter code: Leucyl/phenylalanyl-tRNA--protein transferase (265 aa).

The segment at Leu-244 to Pro-265 is disordered.

The protein belongs to the L/F-transferase family.

The protein localises to the cytoplasm. The enzyme catalyses N-terminal L-lysyl-[protein] + L-leucyl-tRNA(Leu) = N-terminal L-leucyl-L-lysyl-[protein] + tRNA(Leu) + H(+). The catalysed reaction is N-terminal L-arginyl-[protein] + L-leucyl-tRNA(Leu) = N-terminal L-leucyl-L-arginyl-[protein] + tRNA(Leu) + H(+). It carries out the reaction L-phenylalanyl-tRNA(Phe) + an N-terminal L-alpha-aminoacyl-[protein] = an N-terminal L-phenylalanyl-L-alpha-aminoacyl-[protein] + tRNA(Phe). Functions in the N-end rule pathway of protein degradation where it conjugates Leu, Phe and, less efficiently, Met from aminoacyl-tRNAs to the N-termini of proteins containing an N-terminal arginine or lysine. This is Leucyl/phenylalanyl-tRNA--protein transferase from Methylibium petroleiphilum (strain ATCC BAA-1232 / LMG 22953 / PM1).